The primary structure comprises 499 residues: Cytochrome P450 705A12 (499 aa).

Residues 4–24 traverse the membrane as a helical segment; it reads LIIVDFQNISIFILLCLFSFL. Cys-439 lines the heme pocket.

Belongs to the cytochrome P450 family. Heme is required as a cofactor.

The protein resides in the membrane. In terms of biological role, may be involved in hydroxylation of the triterpene marneral. The protein is Cytochrome P450 705A12 of Arabidopsis thaliana (Mouse-ear cress).